A 124-amino-acid chain; its full sequence is Fluoride-specific ion channel FluC (124 aa).

The next 4 membrane-spanning stretches (helical) occupy residues 5-25 (FLQV…VNIL), 35-55 (LGTL…AALL), 63-83 (LAPF…AFAL), and 98-118 (LGYV…GLTV). Residues Gly73 and Thr76 each coordinate Na(+).

This sequence belongs to the fluoride channel Fluc/FEX (TC 1.A.43) family.

The protein resides in the cell inner membrane. The enzyme catalyses fluoride(in) = fluoride(out). With respect to regulation, na(+) is not transported, but it plays an essential structural role and its presence is essential for fluoride channel function. Functionally, fluoride-specific ion channel. Important for reducing fluoride concentration in the cell, thus reducing its toxicity. The sequence is that of Fluoride-specific ion channel FluC from Paracoccus denitrificans (strain Pd 1222).